Here is a 145-residue protein sequence, read N- to C-terminus: Protein SprT-like (145 aa).

The region spanning 4–140 is the SprT-like domain; it reads TNYVQEVSLA…VCGNCHGKLI (137 aa). Residue His64 coordinates Zn(2+). The active site involves Glu65. Zn(2+) is bound at residue His68.

It belongs to the SprT family. The cofactor is Zn(2+).

The protein localises to the cytoplasm. The chain is Protein SprT-like from Streptococcus pyogenes serotype M18 (strain MGAS8232).